Here is a 268-residue protein sequence, read N- to C-terminus: Protein APE_1980.1 (268 aa).

The protein belongs to the CinA family.

The protein is Protein APE_1980.1 of Aeropyrum pernix (strain ATCC 700893 / DSM 11879 / JCM 9820 / NBRC 100138 / K1).